The primary structure comprises 268 residues: Protein c-ets-1-B (268 aa).

The segment at 131-139 is helix HI-1; the sequence is FKDYVRDRA. The segment at 150 to 157 is helix HI-2; the sequence is AAALAGYT. Residues 162–242 constitute a DNA-binding region (ETS); sequence IQLWQFLLEL…AGKRYVYRFV (81 aa). Residues 245 to 249 are helix H4; the sequence is LQSLL. Positions 253–259 are helix H5; it reads PEELHAM.

Belongs to the ETS family. In terms of assembly, binds DNA as a homodimer; homodimerization is required for transcription activation.

The protein localises to the nucleus. Its subcellular location is the cytoplasm. With respect to regulation, autoinhibited by a module composed of four alpha helices (HI-1, HI-2, H4, and H5) that flank the DNA-binding ETS domain, reducing the affinity for DNA. Functionally, transcription factor. Directly controls the expression of cytokine and chemokine genes in a wide variety of different cellular contexts. This is Protein c-ets-1-B (ets1-b) from Xenopus laevis (African clawed frog).